Here is a 961-residue protein sequence, read N- to C-terminus: Ubiquitin carboxyl-terminal hydrolase 4 (961 aa).

The region spanning 11–122 (PDVETQKTEL…GQQPIVRKVV (112 aa)) is the DUSP domain. Residues 27 to 216 (TLQRGAQWYL…LYQGQVLVIE (190 aa)) are necessary for interaction with SART3. The short motif at 133–141 (VEVYLLELK) is the Nuclear export signal element. Residues 142–226 (LCENSDPTNV…PQNEDGTWPR (85 aa)) form the Ubiquitin-like 1 domain. The disordered stretch occupies residues 219-257 (NEDGTWPRQTLQSKSSTAPSRNFTTSSKPSASPYSSMSA). Positions 225–243 (PRQTLQSKSSTAPSRNFTT) are enriched in polar residues. The interval 229–295 (LQSKSSTAPS…SYNCQEPPSP (67 aa)) is required for USP4 activation by providing conformational flexibility between the DUSP and catalytic domains. The span at 244–257 (SSKPSASPYSSMSA) shows a compositional bias: low complexity. Residues 302 to 921 (CGLGNLGNTC…AAYVLFYQRR (620 aa)) form the USP domain. Residue C311 is part of the active site. A regulates ubiquitin dissociation region spans residues 384 to 386 (PQF). The tract at residues 405-407 (LHE) is necessary for interaction with RBL2. Phosphoserine is present on S445. The segment at 459–463 (LVCPE) is necessary for interaction with RB1 and RBL2. Zn(2+) contacts are provided by C461 and C464. In terms of domain architecture, Ubiquitin-like 2 spans 483–571 (LKKDRIMEVF…IFVYEICTTP (89 aa)). The interacts with DUSP and ubiquitin-like 1 domains and is required for USP4 activation stretch occupies residues 485–773 (KDRIMEVFLV…SQPQKKKKAA (289 aa)). Positions 641–700 (SSPLEPGACNGSRGSYEGDEEEMDHQEEGKEQLSEVEESGEDSQGGDPTETTQKAKGPPR) are disordered. Phosphoserine is present on residues S655, S674, and S679. The Nuclear localization signal motif lies at 765-770 (QPQKKK). Residues C797 and C800 each contribute to the Zn(2+) site. The active site involves H879. Positions 924–961 (ECPSTSSPVSFPGSDGGAKLSSSQQDLGEEEAYTMDTN) are disordered. Over residues 950–961 (LGEEEAYTMDTN) the composition is skewed to acidic residues.

This sequence belongs to the peptidase C19 family. USP4 subfamily. As to quaternary structure, interacts with RB1 (both dephosphorylated and hypophosphorylated forms). Interacts with RBL1 and RBL2. Interacts with ADORA2A (via cytoplasmic C-terminus); the interaction is direct. Interacts with SART3; recruits USP4 to its substrate PRPF3. Phosphorylated at Ser-445 by PKB/AKT1 in response to EGF stimulus, promoting its ability deubiquitinate RHEB. In terms of processing, monoubiquitinated by TRIM21. Ubiquitination does not lead to its proteasomal degradation. Autodeubiquitinated. Expressed in hippocampus and striatum (at protein level).

It localises to the cytoplasm. The protein localises to the nucleus. It carries out the reaction Thiol-dependent hydrolysis of ester, thioester, amide, peptide and isopeptide bonds formed by the C-terminal Gly of ubiquitin (a 76-residue protein attached to proteins as an intracellular targeting signal).. With respect to regulation, the completion of the deubiquitinase reaction is mediated by the DUSP and ubiquitin-like 1 domains which promotes the release of ubiquitin from the catalytic site enabling subsequent reactions to occur. In terms of biological role, deubiquitinating enzyme that removes conjugated ubiquitin from target proteins. Deubiquitinates PDPK1. Deubiquitinates TRIM21. Deubiquitinates receptor ADORA2A which increases the amount of functional receptor at the cell surface. Deubiquitinates HAS2. Deubiquitinates RHEB in response to EGF signaling, promoting mTORC1 signaling. May regulate mRNA splicing through deubiquitination of the U4 spliceosomal protein PRPF3. This may prevent its recognition by the U5 component PRPF8 thereby destabilizing interactions within the U4/U6.U5 snRNP. May also play a role in the regulation of quality control in the ER. This Rattus norvegicus (Rat) protein is Ubiquitin carboxyl-terminal hydrolase 4 (Usp4).